The chain runs to 114 residues: Large ribosomal subunit protein uL22 (114 aa).

The protein belongs to the universal ribosomal protein uL22 family. As to quaternary structure, part of the 50S ribosomal subunit.

Its function is as follows. This protein binds specifically to 23S rRNA; its binding is stimulated by other ribosomal proteins, e.g. L4, L17, and L20. It is important during the early stages of 50S assembly. It makes multiple contacts with different domains of the 23S rRNA in the assembled 50S subunit and ribosome. The globular domain of the protein is located near the polypeptide exit tunnel on the outside of the subunit, while an extended beta-hairpin is found that lines the wall of the exit tunnel in the center of the 70S ribosome. This chain is Large ribosomal subunit protein uL22, found in Streptococcus pyogenes serotype M5 (strain Manfredo).